The chain runs to 540 residues: Probable protein kinase UbiB (540 aa).

A helical transmembrane segment spans residues 24–44 (LLFDQPLLPWWLASLRLLMPW). The Protein kinase domain maps to 126–494 (RFDVEPLASA…RRRQGDRWAL (369 aa)). ATP is bound by residues 132-140 (LASASVAQV) and K154. D289 functions as the Proton acceptor in the catalytic mechanism. The next 2 membrane-spanning stretches (helical) occupy residues 496–516 (LLGA…AETA) and 518–538 (LAAP…YLIV).

It belongs to the ABC1 family. UbiB subfamily.

The protein localises to the cell inner membrane. It participates in cofactor biosynthesis; ubiquinone biosynthesis [regulation]. Is probably a protein kinase regulator of UbiI activity which is involved in aerobic coenzyme Q (ubiquinone) biosynthesis. This chain is Probable protein kinase UbiB, found in Pseudomonas putida (strain ATCC 700007 / DSM 6899 / JCM 31910 / BCRC 17059 / LMG 24140 / F1).